The sequence spans 159 residues: Urease subunit beta 2 (159 aa).

A disordered region spans residues 1-23; it reads MAKEPTEAAHPQPEQTKTNHKAH.

This sequence belongs to the urease beta subunit family. In terms of assembly, heterotrimer of UreA (gamma), UreB (beta) and UreC (alpha) subunits. Three heterotrimers associate to form the active enzyme.

It is found in the cytoplasm. The enzyme catalyses urea + 2 H2O + H(+) = hydrogencarbonate + 2 NH4(+). It participates in nitrogen metabolism; urea degradation; CO(2) and NH(3) from urea (urease route): step 1/1. This Brucella abortus biovar 1 (strain 9-941) protein is Urease subunit beta 2.